The sequence spans 307 residues: Undecaprenyl-diphosphatase 2 (307 aa).

A run of 8 helical transmembrane segments spans residues 19–41, 56–76, 117–137, 144–164, 208–228, 229–249, 251–271, and 285–305; these read GVTEFLPVSSTGHMIILGSIIGF, IHMFEIIIQLGAILAIVVLYW, FKFWTNIVVACIPAIVIGLPF, LLFFPAPVAAALMVGAVWMIF, IIGAWIVGVATVAGAEFSFFL, AIPMMLGASLLFLIKNSVVLS, VQILGLAVGFIVAFIVALVVV, and IFAVYRLAIGIIVLVLGFTKV.

This sequence belongs to the UppP family.

The protein resides in the cell membrane. It catalyses the reaction di-trans,octa-cis-undecaprenyl diphosphate + H2O = di-trans,octa-cis-undecaprenyl phosphate + phosphate + H(+). Functionally, catalyzes the dephosphorylation of undecaprenyl diphosphate (UPP). Confers resistance to bacitracin. The protein is Undecaprenyl-diphosphatase 2 of Clostridium acetobutylicum (strain ATCC 824 / DSM 792 / JCM 1419 / IAM 19013 / LMG 5710 / NBRC 13948 / NRRL B-527 / VKM B-1787 / 2291 / W).